The sequence spans 713 residues: MSDQIRASGYFYSQTDDPFAAAFWSQFQDPHVLAARHIPADSSASAAMKAYREYRDRVRKPVLATYTILGFLSSGTYGRVYKARLRTPPQLASSSGTAGIANANAGTGSGTATVGSGASTAKKRGGLLQQHQLLDSPSSSLHATPKSVADGAGVGVNGTPSASPSLSASLGTSTANAPGGSDNTLQLSSNELPDTQIYAIKKFKPDSKETDATIYTGISQSAMREISLNRELSHVNIVTLHQVMLEDKAIYMVFEYAEHDLLQIIHYHSTALRAPIPLAVLKSLLWQLINGVAYLHANWILHRDLKPANILVTSQGVVKIGDLGLARLYSSPLQSLYNGDKVVVTIWYRAPELLLGARHYTTAIDMWSVGCIWGELLALRPMFKGEEAKMDPKTKAAPFQTDQLKRIVEVLGTPNKDRWPAIESMPDYKGWWPHLRLDNYPKTLSRWYATRNKGDDGYELFNSLLQYDPEQRLTANQALEHAWFTAQDPKPTANAFSSLAKPHATYPNRRVIQDDMDPKMKSNYVPPIKSHHMQPWHQVNLNSSQPHRLAQLMYQQEQMRHQQMQTQAPAPAPAQPPAATAVTGRLGHAVGAGSSAVGTAANVGGPAAPPPIAIGSTAGTGGAIGIQSSAASTAPSQHMYNNNPLITIAGTNGGTISNPATVRSSHSIGSTESITPTTSSQPIPAQPSSAPLARTTNLVATATRNQQRKRQRN.

Residues 66-484 (YTILGFLSSG…ANQALEHAWF (419 aa)) enclose the Protein kinase domain. Residue 72 to 80 (LSSGTYGRV) coordinates ATP. Low complexity predominate over residues 104–120 (NAGTGSGTATVGSGAST). The interval 104–188 (NAGTGSGTAT…GGSDNTLQLS (85 aa)) is disordered. A compositionally biased stretch (polar residues) spans 129-142 (QQHQLLDSPSSSLH). Low complexity predominate over residues 158–175 (GTPSASPSLSASLGTSTA). Lys-201 is an ATP binding site. Asp-304 serves as the catalytic Proton acceptor. Polar residues predominate over residues 657-672 (SNPATVRSSHSIGSTE). Positions 657–713 (SNPATVRSSHSIGSTESITPTTSSQPIPAQPSSAPLARTTNLVATATRNQQRKRQRN) are disordered. The segment covering 673 to 691 (SITPTTSSQPIPAQPSSAP) has biased composition (low complexity). The segment covering 694 to 705 (RTTNLVATATRN) has biased composition (polar residues).

This sequence belongs to the protein kinase superfamily. CMGC Ser/Thr protein kinase family. CDC2/CDKX subfamily. In terms of assembly, component of the srb8-11 complex, a regulatory module of the Mediator complex. Mg(2+) serves as cofactor.

The protein localises to the nucleus. The enzyme catalyses L-seryl-[protein] + ATP = O-phospho-L-seryl-[protein] + ADP + H(+). The catalysed reaction is L-threonyl-[protein] + ATP = O-phospho-L-threonyl-[protein] + ADP + H(+). It carries out the reaction [DNA-directed RNA polymerase] + ATP = phospho-[DNA-directed RNA polymerase] + ADP + H(+). Component of the srb8-11 complex. The srb8-11 complex is a regulatory module of the Mediator complex which is itself dependent transcription. The srb8-11 complex may be involved in the transcriptional repression of a subset of genes regulated by Mediator. It may inhibit the association of the Mediator complex with RNA polymerase II to form the holoenzyme complex. The srb8-11 complex phosphorylates the C-terminal domain (CTD) of the largest subunit of RNA polymerase II. The chain is Serine/threonine-protein kinase SSN3 (SSN3) from Mycosarcoma maydis (Corn smut fungus).